The sequence spans 210 residues: MSLISNNEERSLRVRYCIAIALSALLISGCTTLRLPNQSTSVYHQQTWAQRYYDLSRISQWNIDGAFSIQQPGKTIIAAYDWQQKGMNYRIRIHSSLDIYSVNISGRPGMVTLWRSPRQHYTASTPEQLMQQQLGWQLPLSNLYYWIRGIPAPGAYQADFDTYTHLIALQQSGWHIRFSQYTTVGSVDLPRTLQLSNGPLAVKIVVKHWQ.

The signal sequence occupies residues 1–29 (MSLISNNEERSLRVRYCIAIALSALLISG). C30 is lipidated: N-palmitoyl cysteine. C30 carries S-diacylglycerol cysteine lipidation.

It belongs to the LolB family. As to quaternary structure, monomer.

Its subcellular location is the cell outer membrane. Its function is as follows. Plays a critical role in the incorporation of lipoproteins in the outer membrane after they are released by the LolA protein. This chain is Outer-membrane lipoprotein LolB, found in Coxiella burnetii (strain CbuG_Q212) (Coxiella burnetii (strain Q212)).